An 828-amino-acid chain; its full sequence is Vacuolar transporter chaperone complex subunit 2 (828 aa).

Positions 1-146 constitute an SPX domain; the sequence is MLFGVKLANE…PKYPSVKSLL (146 aa). Topologically, residues 1–693 are cytoplasmic; that stretch reads MLFGVKLANE…EAKVWLANER (693 aa). An important for inositol polyphosphate binding region spans residues 127 to 134; sequence KIVKKHDK. Phosphoserine occurs at positions 182, 187, 196, 264, 583, 615, and 616. The interval 580–636 is disordered; that stretch reads RRLSNLKEPQHQAAVPVSQEENERITSQGDLEADGSSDEETEQEPHSKRSKKVRRRK. The segment covering 610–621 has biased composition (acidic residues); sequence LEADGSSDEETE. Thr620 bears the Phosphothreonine mark. Position 626 is a phosphoserine (Ser626). The segment covering 627–636 has biased composition (basic residues); that stretch reads KRSKKVRRRK. Ser657 carries the post-translational modification Phosphoserine. The chain crosses the membrane as a helical span at residues 694–716; the sequence is TFNRWLSVTSLLSVLTFSIYNSV. Residues 717–727 lie on the Vacuolar side of the membrane; it reads KKAEYPTLANY. The helical transmembrane segment at 728-748 threads the bilayer; that stretch reads MAYVYFGLTIFCALWSYSIYM. Over 749–766 the chain is Cytoplasmic; that stretch reads KRVDIIQQRSGQHLDAPL. A helical transmembrane segment spans residues 767 to 787; it reads GPVLVSIVLFVTLVVNFVMAF. Topologically, residues 788-828 are vacuolar; sequence RNAAKSRQELQIQNLEVPERIPEVLRPLQNYLFKLMGPSSD.

The protein belongs to the VTC2/3 family. In terms of assembly, the VTC core complex is an integral membrane heterooligomer composed of the catalytic subunit VTC4 and the accessory subunits VTC1, VTC2 and VTC3. The complex exists in 2 different sub-complexes: VTC1-VTC2-VCT4 and VCT1-VTC3-VTC4. The VCT1-VTC3-VTC4 subcomplex is mostly found on the vacuolar membrane. The VTC1-VTC2-VCT4 subcomplex is observed in the cell periphery, probably ER and nuclear envelope, but localizes to the vacuole under phosphate starvation. Each subunit contains 3 transmembrane helices. VTC1 is a small membrane protein without hydrophilic domain. VTC2, VTC3 and VTC4 are related and have 2 hydrophilic domains that face the cytosol, an N-terminal SPX domain and the central core domain. The central core in VTC4 is the catalytic domain, with the essential catalytic lysine replaced by isoleucine and leucine in VTC2 and VTC3, respectively. The core complex associates with the accessory subunit VTC5. The complex interacts with the v-SNARE NYV1 and with the V(0) subunit of V-ATPase VPH1.

The protein resides in the vacuole membrane. The protein localises to the cytoplasm. It is found in the cell cortex. It localises to the endoplasmic reticulum membrane. Its subcellular location is the cytoplasmic vesicle. The protein resides in the autophagosome membrane. Functionally, accessory subunit of the vacuolar transporter chaperone (VTC) complex. The VTC complex acts as a vacuolar polyphosphate polymerase that catalyzes the synthesis of inorganic polyphosphate (polyP) via transfer of phosphate from ATP to a growing polyP chain, releasing ADP. VTC exposes its catalytic domain VTC4 to the cytosol, where the growing polyP chain winds through a tunnel-shaped pocket, integrating cytoplasmic polymer synthesis with polyP membrane translocation. The VTC complex carries 9 vacuolar transmembrane domains, which are likely to constitute the translocation channel into the organelle lumen. PolyP synthesis is tightly coupled to its transport into the vacuole lumen, in order to avoid otherwise toxic intermediates in the cytosol, and it depends on the proton gradient across the membrane, formed by V-ATPase. Binds inositol hexakisphosphate (Ins6P) and similar inositol polyphosphates, such as 5-diphospho-inositol pentakisphosphate (5-InsP7); these are important intracellular signaling molecules. Inositol polyphosphate binding promotes vacuolar polyphosphate synthesis. The VTC complex also plays a role in vacuolar membrane fusion. Required for SEC18/NSF activity in SNARE priming, membrane binding of LMA1 and V(0) trans-complex formation. This is Vacuolar transporter chaperone complex subunit 2 from Saccharomyces cerevisiae (strain ATCC 204508 / S288c) (Baker's yeast).